The following is an 86-amino-acid chain: Large ribosomal subunit protein uL23 (86 aa).

This sequence belongs to the universal ribosomal protein uL23 family. As to quaternary structure, part of the 50S ribosomal subunit. Contacts protein L29.

In terms of biological role, binds to 23S rRNA. One of the proteins that surrounds the polypeptide exit tunnel on the outside of the ribosome. This Methanococcus vannielii (strain ATCC 35089 / DSM 1224 / JCM 13029 / OCM 148 / SB) protein is Large ribosomal subunit protein uL23.